A 466-amino-acid polypeptide reads, in one-letter code: GTPase Der (466 aa).

2 EngA-type G domains span residues 30–193 and 203–376; these read PVVA…PEVS and RRVA…ASWD. GTP is bound by residues 36 to 43, 83 to 87, 145 to 148, 209 to 216, 256 to 260, and 321 to 324; these read GRPNVGKS, DTGGW, NKVD, GKPNVGKS, DTAGL, and NKWD. The 83-residue stretch at 377 to 459 folds into the KH-like domain; sequence TRIATGPLNS…PIRINVRVRE (83 aa).

This sequence belongs to the TRAFAC class TrmE-Era-EngA-EngB-Septin-like GTPase superfamily. EngA (Der) GTPase family. As to quaternary structure, associates with the 50S ribosomal subunit.

In terms of biological role, GTPase that plays an essential role in the late steps of ribosome biogenesis. The protein is GTPase Der of Mycolicibacterium paratuberculosis (strain ATCC BAA-968 / K-10) (Mycobacterium paratuberculosis).